A 485-amino-acid chain; its full sequence is WD repeat-containing protein 13 (485 aa).

Ser70, Ser74, and Ser79 each carry phosphoserine. Position 114 is an asymmetric dimethylarginine; alternate (Arg114). At Arg114 the chain carries Omega-N-methylarginine; alternate. 5 WD repeats span residues 170–210, 215–254, 302–341, 406–446, and 451–484; these read HVDE…PTVL, GHTRGVSDFAWSLSNDILVSTSLDATMRIWASEDGRCIRE, KLTGRVLALSFDAPGRLLWAGDDRGSVFSFLFDMATGKLT, HPVR…KAAV, and GHSAPVLDVSFNCDESLLASSDASGMVIVWRREQ.

It localises to the nucleus. This Pongo abelii (Sumatran orangutan) protein is WD repeat-containing protein 13 (WDR13).